A 446-amino-acid polypeptide reads, in one-letter code: Probable cytosolic iron-sulfur protein assembly protein 1 (446 aa).

WD repeat units follow at residues 17–59, 63–106, 143–182, 192–241, 247–291, 330–368, and 398–446; these read AFKP…AHSN, GHTR…PLEE, GHENEIKSAAFSPSGQYLATCSRDKSIWIWEDVGANEGDD, EHDG…EWAC, GHSS…PEAS, VHTRDIYSASWSKNGRVASTGSDGSILVYEECAPSNPST, and GHGP…SIEL. Positions 106-128 are enriched in basic and acidic residues; sequence EGTKKGESTEIDVTRRRNNNDSD. The tract at residues 106–133 is disordered; that stretch reads EGTKKGESTEIDVTRRRNNNDSDKDNDD.

Belongs to the WD repeat CIA1 family.

Functionally, essential component of the cytosolic iron-sulfur (Fe/S) protein assembly machinery. Required for the maturation of extramitochondrial Fe/S proteins. This is Probable cytosolic iron-sulfur protein assembly protein 1 from Pyricularia oryzae (strain 70-15 / ATCC MYA-4617 / FGSC 8958) (Rice blast fungus).